Consider the following 353-residue polypeptide: Photosystem II protein D1 (353 aa).

The residue at position 2 (Thr-2) is an N-acetylthreonine. The residue at position 2 (Thr-2) is a Phosphothreonine. A run of 3 helical transmembrane segments spans residues 29–46, 118–133, and 142–156; these read YVGW…TAVS, HFFL…EWEL, and WIAV…AATA. His-118 serves as a coordination point for chlorophyll a. Tyr-126 lines the pheophytin a pocket. [CaMn4O5] cluster contacts are provided by Asp-170 and Glu-189. A helical membrane pass occupies residues 197–218; sequence FHMLGVAGVFGGSLFSAMHGSL. His-198 contributes to the chlorophyll a binding site. Residues His-215 and 264-265 contribute to the a quinone site; that span reads SF. A Fe cation-binding site is contributed by His-215. His-272 is a Fe cation binding site. Residues 274–288 form a helical membrane-spanning segment; that stretch reads FLAAWPVVGIWFTAL. 4 residues coordinate [CaMn4O5] cluster: His-332, Glu-333, Asp-342, and Ala-344. The propeptide occupies 345–353; that stretch reads SVEAPSING.

Belongs to the reaction center PufL/M/PsbA/D family. As to quaternary structure, PSII is composed of 1 copy each of membrane proteins PsbA, PsbB, PsbC, PsbD, PsbE, PsbF, PsbH, PsbI, PsbJ, PsbK, PsbL, PsbM, PsbT, PsbX, PsbY, PsbZ, Psb30/Ycf12, at least 3 peripheral proteins of the oxygen-evolving complex and a large number of cofactors. It forms dimeric complexes. Requires The D1/D2 heterodimer binds P680, chlorophylls that are the primary electron donor of PSII, and subsequent electron acceptors. It shares a non-heme iron and each subunit binds pheophytin, quinone, additional chlorophylls, carotenoids and lipids. D1 provides most of the ligands for the Mn4-Ca-O5 cluster of the oxygen-evolving complex (OEC). There is also a Cl(-1) ion associated with D1 and D2, which is required for oxygen evolution. The PSII complex binds additional chlorophylls, carotenoids and specific lipids. as cofactor. Tyr-161 forms a radical intermediate that is referred to as redox-active TyrZ, YZ or Y-Z. In terms of processing, C-terminally processed by CTPA; processing is essential to allow assembly of the oxygen-evolving complex and thus photosynthetic growth.

The protein resides in the plastid. Its subcellular location is the chloroplast thylakoid membrane. The enzyme catalyses 2 a plastoquinone + 4 hnu + 2 H2O = 2 a plastoquinol + O2. Functionally, photosystem II (PSII) is a light-driven water:plastoquinone oxidoreductase that uses light energy to abstract electrons from H(2)O, generating O(2) and a proton gradient subsequently used for ATP formation. It consists of a core antenna complex that captures photons, and an electron transfer chain that converts photonic excitation into a charge separation. The D1/D2 (PsbA/PsbD) reaction center heterodimer binds P680, the primary electron donor of PSII as well as several subsequent electron acceptors. This Tupiella akineta (Green alga) protein is Photosystem II protein D1.